The chain runs to 425 residues: G protein-activated inward rectifier potassium channel 2 (425 aa).

The Cytoplasmic portion of the chain corresponds to 1–91 (MTMAKLTESM…IFTTLVDLKW (91 aa)). Ser18 and Ser25 each carry phosphoserine. A helical membrane pass occupies residues 92 to 116 (RFNLLIFVMVYTVTWLFFGMIWWLI). Topologically, residues 117-140 (AYIRGDMDHIEDPSWTPCVTNLNG) are extracellular. Positions 141-152 (FVSAFLFSIETE) form an intramembrane region, helical; Pore-forming. Positions 153–159 (TTIGYGY) form an intramembrane region, pore-forming. The short motif at 154 to 159 (TIGYGY) is the Selectivity filter element. Residues 160–168 (RVITDKCPE) lie on the Extracellular side of the membrane. Residues 169–190 (GIILLLIQSVLGSIVNAFMVGC) traverse the membrane as a helical segment. The Cytoplasmic portion of the chain corresponds to 191–425 (MFVKISQPKK…VANLENESKV (235 aa)). The tract at residues 392-425 (NQHAELETEEEEKNPEELTERNGDVANLENESKV) is disordered. A PDZ-binding motif is present at residues 422–425 (ESKV).

This sequence belongs to the inward rectifier-type potassium channel (TC 1.A.2.1) family. KCNJ6 subfamily. In terms of assembly, associates with KCNJ3/GIRK1 or KCNJ5/GRIK4 to form a G-protein-activated heteromultimer pore-forming unit. The resulting inward current is much larger. Interacts (via PDZ-binding motif) with SNX27 (via PDZ domain); the interaction is required for recycling to the plasma membrane when endocytosed and prevent degradation in lysosomes. As to expression, pancreatic beta cells and brain.

The protein resides in the membrane. The enzyme catalyses K(+)(in) = K(+)(out). With respect to regulation, activated by phosphatidylinositol 4,5 biphosphate (PtdIns(4,5)P2). Functionally, inward rectifier potassium channels are characterized by a greater tendency to allow potassium to flow into the cell rather than out of it. Their voltage dependence is regulated by the concentration of extracellular potassium; as external potassium is raised, the voltage range of the channel opening shifts to more positive voltages. The inward rectification is mainly due to the blockage of outward current by internal magnesium. This potassium channel may be involved in the regulation of insulin secretion by glucose and/or neurotransmitters acting through G-protein-coupled receptors. The sequence is that of G protein-activated inward rectifier potassium channel 2 (Kcnj6) from Rattus norvegicus (Rat).